Consider the following 149-residue polypeptide: MRLHELYPFAEERASRKRVGRGSGSGLGCTSGKGNKGQNARAGGGVRPGFEGGQMPLQRRLPKRGFKNAPFKATYEVINLDRLVASFEGKTDITLEDIYARGLCKAGASVKILGVGEVSVALTVEAHKFSASAAEKIRNAGGEAKALEG.

The disordered stretch occupies residues 14–63; that stretch reads ASRKRVGRGSGSGLGCTSGKGNKGQNARAGGGVRPGFEGGQMPLQRRLPK. Composition is skewed to gly residues over residues 21–35 and 42–52; these read RGSGSGLGCTSGKGN and AGGGVRPGFEG.

It belongs to the universal ribosomal protein uL15 family. As to quaternary structure, part of the 50S ribosomal subunit.

Binds to the 23S rRNA. The protein is Large ribosomal subunit protein uL15 of Nitratidesulfovibrio vulgaris (strain DSM 19637 / Miyazaki F) (Desulfovibrio vulgaris).